Reading from the N-terminus, the 439-residue chain is Glutamine synthetase (439 aa).

The GS beta-grasp domain maps to 13–98 (ENVRFIRLQF…VICDVYTPDG (86 aa)). Positions 105–439 (PRYRLRRMME…NWELQRYLYL (335 aa)) constitute a GS catalytic domain. Mg(2+) contacts are provided by E128 and E130. E180 is an ATP binding site. Mg(2+)-binding residues include E185 and E192. Residues 236-237 (NG) and G237 each bind L-glutamate. Residue H241 participates in Mg(2+) binding. Residues 243–245 (HMS) and S245 contribute to the ATP site. 3 residues coordinate L-glutamate: R294, E300, and R312. 3 residues coordinate ATP: R312, R317, and K324. Mg(2+) is bound at residue E329. Residue R331 participates in L-glutamate binding.

It belongs to the glutamine synthetase family. Oligomer of 12 subunits arranged in the form of two hexagons. In its feedback-inhibited form, interacts with TnrA in order to block its DNA-binding activity. Mg(2+) serves as cofactor.

The protein resides in the cytoplasm. The catalysed reaction is L-glutamate + NH4(+) + ATP = L-glutamine + ADP + phosphate + H(+). With respect to regulation, inhibited by glutamine. In terms of biological role, glutamine synthetase (GS) is an unusual multitasking protein that functions as an enzyme, a transcription coregulator, and a chaperone in ammonium assimilation and in the regulation of genes involved in nitrogen metabolism. It catalyzes the ATP-dependent biosynthesis of glutamine from glutamate and ammonia. Feedback-inhibited GlnA also interacts with and regulates the activity of the transcriptional regulator TnrA. During nitrogen limitation, TnrA is in its DNA-binding active state and turns on the transcription of genes required for nitrogen assimilation. Under conditions of nitrogen excess, feedback-inhibited GlnA forms a stable complex with TnrA, which inhibits its DNA-binding activity. In contrast, feedback-inhibited GlnA acts as a chaperone to stabilize the DNA-binding activity of GlnR, which represses the transcription of nitrogen assimilation genes. This chain is Glutamine synthetase, found in Thermotoga maritima (strain ATCC 43589 / DSM 3109 / JCM 10099 / NBRC 100826 / MSB8).